The sequence spans 55 residues: Large ribosomal subunit protein bL33 (55 aa).

This sequence belongs to the bacterial ribosomal protein bL33 family.

The protein is Large ribosomal subunit protein bL33 of Sphingopyxis alaskensis (strain DSM 13593 / LMG 18877 / RB2256) (Sphingomonas alaskensis).